A 390-amino-acid polypeptide reads, in one-letter code: 3-ketosteroid-9-alpha-monooxygenase, oxygenase component (390 aa).

The region spanning W32–V134 is the Rieske domain. Residues C73, H75, C92, and H95 each contribute to the [2Fe-2S] cluster site. The Fe cation site is built by N181, H187, H192, and D311.

In terms of assembly, homotrimer. The two-component system 3-ketosteroid-9-alpha-monooxygenase is composed of an oxygenase component KshA and a reductase component KshB. Requires [2Fe-2S] cluster as cofactor. Fe cation serves as cofactor.

It carries out the reaction androsta-1,4-diene-3,17-dione + 2 reduced [2Fe-2S]-[ferredoxin] + O2 + 2 H(+) = 9alpha-hydroxyandrosta-1,4-diene-3,17-dione + 2 oxidized [2Fe-2S]-[ferredoxin] + H2O. It participates in steroid metabolism; cholesterol degradation. Functionally, probably involved in the degradation of cholesterol. In vitro, catalyzes the introduction of a 9alpha-hydroxyl moiety into the ring B of 3-ketosteroid substrates such as 1,4-androstadiene-3,17-dione (ADD), 4-androstene-3,17-dione (AD), 4-androstene-17beta-ol-3-one (testosterone), 4-pregnene-3,20-dione (progesterone), 19-nor-4-androstene-3,17-dione, 1-(5alpha)-androstene-3,17-dione, 5alpha-androstane-3,17-dione, 5beta-androstane-3,17-dione, 5alpha-androstane-17beta-ol-3-one (stanolon), 11beta-hydrocortisone, 3-oxo-23,24-bisnorcholesta-4-en-22-oate (4-BNC), 23,24-bisnorcholesta-4-ene-22-oate, 3-oxo-23,24-bisnorcholesta-1,4-dien-22-oate (1,4-BNC) and 3-oxo-23,24-bisnorcholesta-1,4-dien-22-oyl-coenzyme A thioester (1,4-BNC-CoA). KshA5 has the broadest substrate range without a clear substrate preference and is active with Delta-4, Delta-1,4, 5alpha-H and 5beta-H steroids, as well as with steroids having bulky aliphatic side chains and an isopropionyl side chain at C17. The polypeptide is 3-ketosteroid-9-alpha-monooxygenase, oxygenase component (Rhodococcus rhodochrous).